A 320-amino-acid polypeptide reads, in one-letter code: 4-hydroxythreonine-4-phosphate dehydrogenase (320 aa).

Residue Thr132 participates in substrate binding. A divalent metal cation-binding residues include His161, His205, and His258. The substrate site is built by Lys266, Asn275, and Arg284.

The protein belongs to the PdxA family. Homodimer. A divalent metal cation serves as cofactor.

It localises to the cytoplasm. It carries out the reaction 4-(phosphooxy)-L-threonine + NAD(+) = 3-amino-2-oxopropyl phosphate + CO2 + NADH. It functions in the pathway cofactor biosynthesis; pyridoxine 5'-phosphate biosynthesis; pyridoxine 5'-phosphate from D-erythrose 4-phosphate: step 4/5. Catalyzes the NAD(P)-dependent oxidation of 4-(phosphooxy)-L-threonine (HTP) into 2-amino-3-oxo-4-(phosphooxy)butyric acid which spontaneously decarboxylates to form 3-amino-2-oxopropyl phosphate (AHAP). The chain is 4-hydroxythreonine-4-phosphate dehydrogenase from Aquifex aeolicus (strain VF5).